Here is a 372-residue protein sequence, read N- to C-terminus: MKYDLIIIGSGSVGAAAGYYATRAGLNVLMTDAHMPPHQHGSHHGDTRLIRHAYGEGEKYVPLVLRAQTLWDELSRHNEDDPIFVRSGVINLGPADSAFLANVAHSAEQWQLNVEKLDAQGIMARWPEIRVPDNYIGLFETDSGFLRSELAIKTWIQLAKEAGCAQLFNCPVTAIRHDDDGVTIETVDGEYQAKKAIVCAGTWVKDLLPEQPVQPVRKVFAWYQADGRYSVKNKFPAFTGELPNGDQYYGFPAENDALKIGKHNGGQVIHSADERVPFAEVVSDGSEAFPFLRNVLPGIGCCLYGAACTYDNSPDEDFIIDTLPGHDNTLLITGLSGHGFKFASVLGEIAADFAQDKKSDFDLTPFRLSRFQ.

4-34 (DLIIIGSGSVGAAAGYYATRAGLNVLMTDAH) contacts FAD. At C308 the chain carries S-8alpha-FAD cysteine.

The protein belongs to the MSOX/MTOX family. MTOX subfamily. As to quaternary structure, monomer. The cofactor is FAD.

The catalysed reaction is N(alpha)-methyl-L-tryptophan + O2 + H2O = L-tryptophan + formaldehyde + H2O2. Its function is as follows. Catalyzes the oxidative demethylation of N-methyl-L-tryptophan. The sequence is that of N-methyl-L-tryptophan oxidase from Shigella sonnei (strain Ss046).